We begin with the raw amino-acid sequence, 309 residues long: Ribonuclease Z (309 aa).

Positions 63, 65, 67, 68, 145, 216, and 274 each coordinate Zn(2+). The active-site Proton acceptor is the Asp67.

This sequence belongs to the RNase Z family. Homodimer. Zn(2+) serves as cofactor.

It carries out the reaction Endonucleolytic cleavage of RNA, removing extra 3' nucleotides from tRNA precursor, generating 3' termini of tRNAs. A 3'-hydroxy group is left at the tRNA terminus and a 5'-phosphoryl group is left at the trailer molecule.. Its function is as follows. Zinc phosphodiesterase, which displays some tRNA 3'-processing endonuclease activity. Probably involved in tRNA maturation, by removing a 3'-trailer from precursor tRNA. This chain is Ribonuclease Z, found in Streptococcus pneumoniae serotype 19F (strain G54).